We begin with the raw amino-acid sequence, 1038 residues long: Type I restriction enzyme EcoR124I/EcoR124II endonuclease subunit (1038 aa).

Residues 31–249 form a nuclease domain region; that stretch reads QSESDLEREL…LKDFTATCFQ (219 aa). Residues 250 to 469 are motor 1 domain; sequence KHTLLNVLVN…SYVITDAIRD (220 aa). The region spanning 294–439 is the Helicase ATP-binding domain; that stretch reads KNWSKPESGG…YQFGFTGTPI (146 aa). Residue 307-314 coordinates ATP; the sequence is HTTGSGKT. Residues 408–411 carry the DEAH box motif; the sequence is DECH. Positions 470–702 are motor 2 domain; that stretch reads EKVLKFKVDY…YDATKTFGNI (233 aa). Residues 720 to 732 are motor 2-helicase linker; sequence GDKNTKNVVLEKS. The helicase domain stretch occupies residues 732-860; it reads SYTEYMEGFT…NDIRDWQRRE (129 aa). Positions 859–886 are helicase-CTD linker; the sequence is REKEAEKKEKSTTDWDDVVFEVDLLKSQ. Residues 886–1038 are C-terminal domain; sequence QEINLDYILG…EKFKGVGGKI (153 aa).

This sequence belongs to the HsdR family. A monomer in solution. The type I restriction/modification system is composed of three polypeptides R, M and S; the restriction enzyme has stoichiometry R(2)M(2)S(1) while the methyltransferase is M(2)S(1). There is an equilibrium between R(2)M(2)S(1) and R(1)M(2)S(1); the latter is methylation and translocation proficient but restriction deficient. In terms of assembly, (Microbial infection) Holoenenzyme interacts with Escherichia phage T7 protein Ocr; this interaction leads to the inhibition of the restriction activity, but may still allow methylation and translocation.

The catalysed reaction is Endonucleolytic cleavage of DNA to give random double-stranded fragments with terminal 5'-phosphates, ATP is simultaneously hydrolyzed.. The restriction (R) subunit of a type I restriction enzyme that recognizes 5'-GAAN(6)RTCG-3' (for EcoR124I) and 5'-GAAN(7)RTCG-3' (for EcoR124II) and cleaves a random distance away. Subunit R is required for both nuclease and ATPase activities, but not for modification. After locating an unmethylated recognition site, the enzyme complex serves as a molecular motor that translocates DNA in an ATP-dependent manner until a collision occurs that triggers cleavage. The enzyme undergoes major structural changes to bring the motor domains into contact with DNA, allowing DNA translocation. This prevents DNA access to the catalytic domains of both the R and M subunits, preventing both restriction and methylation. The R(1)M(2)S(1) complex translocates an average of 555 bp/second on nicked DNA; the R(2)M(2)S(1) complex translocates at double that speed. The 2 R subunit motors are independent and track along the helical pitch of the DNA, inducing positive supercoiling ahead of themselves. This is Type I restriction enzyme EcoR124I/EcoR124II endonuclease subunit from Escherichia coli.